A 474-amino-acid chain; its full sequence is Glutamate--tRNA ligase (474 aa).

A 'HIGH' region motif is present at residues 9–19; the sequence is PSPTGYLHVGG. The 'KMSKS' region motif lies at 240–244; it reads KLSKR. ATP is bound at residue Lys-243.

This sequence belongs to the class-I aminoacyl-tRNA synthetase family. Glutamate--tRNA ligase type 1 subfamily. Monomer.

The protein localises to the cytoplasm. The catalysed reaction is tRNA(Glu) + L-glutamate + ATP = L-glutamyl-tRNA(Glu) + AMP + diphosphate. Catalyzes the attachment of glutamate to tRNA(Glu) in a two-step reaction: glutamate is first activated by ATP to form Glu-AMP and then transferred to the acceptor end of tRNA(Glu). This is Glutamate--tRNA ligase from Vibrio vulnificus (strain YJ016).